Here is a 210-residue protein sequence, read N- to C-terminus: ATP phosphoribosyltransferase (210 aa).

Belongs to the ATP phosphoribosyltransferase family. Short subfamily. Heteromultimer composed of HisG and HisZ subunits.

It is found in the cytoplasm. It catalyses the reaction 1-(5-phospho-beta-D-ribosyl)-ATP + diphosphate = 5-phospho-alpha-D-ribose 1-diphosphate + ATP. The protein operates within amino-acid biosynthesis; L-histidine biosynthesis; L-histidine from 5-phospho-alpha-D-ribose 1-diphosphate: step 1/9. Catalyzes the condensation of ATP and 5-phosphoribose 1-diphosphate to form N'-(5'-phosphoribosyl)-ATP (PR-ATP). Has a crucial role in the pathway because the rate of histidine biosynthesis seems to be controlled primarily by regulation of HisG enzymatic activity. This Synechocystis sp. (strain ATCC 27184 / PCC 6803 / Kazusa) protein is ATP phosphoribosyltransferase (hisG).